The chain runs to 467 residues: Cysteine--tRNA ligase (467 aa).

C29 contacts Zn(2+). A 'HIGH' region motif is present at residues 31–41 (ATVQGEPHIGH). 3 residues coordinate Zn(2+): C207, H232, and E236. Residues 263–267 (KMSKS) carry the 'KMSKS' region motif. K266 contacts ATP. A disordered region spans residues 446-467 (IDVTDTPNGPEWSLRTARGKAN).

It belongs to the class-I aminoacyl-tRNA synthetase family. Monomer. Requires Zn(2+) as cofactor.

The protein localises to the cytoplasm. The enzyme catalyses tRNA(Cys) + L-cysteine + ATP = L-cysteinyl-tRNA(Cys) + AMP + diphosphate. This Nocardia farcinica (strain IFM 10152) protein is Cysteine--tRNA ligase.